Consider the following 120-residue polypeptide: Large ribosomal subunit protein uL18 (120 aa).

Positions 1–10 are enriched in basic and acidic residues; sequence MKLNRVESTR. Residues 1–26 are disordered; sequence MKLNRVESTRSRHRRVRRKVGGTGDR. A compositionally biased stretch (basic residues) spans 11-20; sequence SRHRRVRRKV.

Belongs to the universal ribosomal protein uL18 family. In terms of assembly, part of the 50S ribosomal subunit; part of the 5S rRNA/L5/L18/L25 subcomplex. Contacts the 5S and 23S rRNAs.

Its function is as follows. This is one of the proteins that bind and probably mediate the attachment of the 5S RNA into the large ribosomal subunit, where it forms part of the central protuberance. The protein is Large ribosomal subunit protein uL18 of Cyanothece sp. (strain PCC 7425 / ATCC 29141).